Consider the following 508-residue polypeptide: Photosystem II CP47 reaction center protein (508 aa).

Transmembrane regions (helical) follow at residues 21–36 (SVHI…WAGS), 101–115 (IVFS…IWHW), 140–156 (GIHL…FGAF), 203–218 (IAAG…FHLS), 237–252 (VLSS…AFVV), and 457–472 (SFAL…HGAR).

This sequence belongs to the PsbB/PsbC family. PsbB subfamily. As to quaternary structure, PSII is composed of 1 copy each of membrane proteins PsbA, PsbB, PsbC, PsbD, PsbE, PsbF, PsbH, PsbI, PsbJ, PsbK, PsbL, PsbM, PsbT, PsbX, PsbY, PsbZ, Psb30/Ycf12, at least 3 peripheral proteins of the oxygen-evolving complex and a large number of cofactors. It forms dimeric complexes. Requires Binds multiple chlorophylls. PSII binds additional chlorophylls, carotenoids and specific lipids. as cofactor.

The protein resides in the plastid. It localises to the chloroplast thylakoid membrane. In terms of biological role, one of the components of the core complex of photosystem II (PSII). It binds chlorophyll and helps catalyze the primary light-induced photochemical processes of PSII. PSII is a light-driven water:plastoquinone oxidoreductase, using light energy to abstract electrons from H(2)O, generating O(2) and a proton gradient subsequently used for ATP formation. In Lemna minor (Common duckweed), this protein is Photosystem II CP47 reaction center protein.